Consider the following 459-residue polypeptide: Putrescine aminotransferase (459 aa).

Residues 150–151 (GT) and Gln274 contribute to the pyridoxal 5'-phosphate site. Position 300 is an N6-(pyridoxal phosphate)lysine (Lys300). Thr332 contributes to the pyridoxal 5'-phosphate binding site.

This sequence belongs to the class-III pyridoxal-phosphate-dependent aminotransferase family. Putrescine aminotransferase subfamily. It depends on pyridoxal 5'-phosphate as a cofactor.

It catalyses the reaction an alkane-alpha,omega-diamine + 2-oxoglutarate = an omega-aminoaldehyde + L-glutamate. It carries out the reaction putrescine + 2-oxoglutarate = 1-pyrroline + L-glutamate + H2O. The enzyme catalyses cadaverine + 2-oxoglutarate = 5-aminopentanal + L-glutamate. It participates in amine and polyamine degradation; putrescine degradation; 4-aminobutanal from putrescine (transaminase route): step 1/1. Catalyzes the aminotransferase reaction from putrescine to 2-oxoglutarate, leading to glutamate and 4-aminobutanal, which spontaneously cyclizes to form 1-pyrroline. This is the first step in one of two pathways for putrescine degradation, where putrescine is converted into 4-aminobutanoate (gamma-aminobutyrate or GABA) via 4-aminobutanal. Also functions as a cadaverine transaminase in a a L-lysine degradation pathway to succinate that proceeds via cadaverine, glutarate and L-2-hydroxyglutarate. The protein is Putrescine aminotransferase of Escherichia coli O6:K15:H31 (strain 536 / UPEC).